Here is a 387-residue protein sequence, read N- to C-terminus: Proline-rich protein 5 (387 aa).

2 interaction with RICTOR regions span residues 10 to 96 (MSSP…LTKG) and 189 to 219 (HESR…YGLY). The tract at residues 11-33 (SSPSLSDLGKREPGAAGADERGT) is disordered. Positions 18–33 (LGKREPGAAGADERGT) are enriched in basic and acidic residues. Phosphoserine is present on Ser253. Disordered stretches follow at residues 262–347 (NPVA…PETL) and 365–387 (DFGR…PSVV). Low complexity predominate over residues 310–321 (SSPSPHSGPCPS). Phosphoserine is present on Ser373.

Belongs to the PROTOR family. Associated component of the mechanistic target of rapamycin complex 2 (mTORC2). Binds directly to MTOR and RICTOR within the TORC2 complex.

Its function is as follows. Associated subunit of mTORC2, which regulates cell growth and survival in response to hormonal signals. mTORC2 is activated by growth factors, but, in contrast to mTORC1, seems to be nutrient-insensitive. mTORC2 seems to function upstream of Rho GTPases to regulate the actin cytoskeleton, probably by activating one or more Rho-type guanine nucleotide exchange factors. PRR5 plays an important role in regulation of PDGFRB expression and in modulation of platelet-derived growth factor signaling. May act as a tumor suppressor in breast cancer. The sequence is that of Proline-rich protein 5 from Rattus norvegicus (Rat).